Consider the following 298-residue polypeptide: UTP--glucose-1-phosphate uridylyltransferase (298 aa).

It belongs to the UDPGP type 2 family.

The enzyme catalyses alpha-D-glucose 1-phosphate + UTP + H(+) = UDP-alpha-D-glucose + diphosphate. The protein operates within carbohydrate metabolism; nucleotide-sugar metabolism. It participates in capsule biogenesis; capsule polysaccharide biosynthesis. The chain is UTP--glucose-1-phosphate uridylyltransferase (galF) from Klebsiella pneumoniae.